A 501-amino-acid chain; its full sequence is Tegument protein US24 (501 aa).

This sequence belongs to the herpesviridae US22 family.

It localises to the virion tegument. This is Tegument protein US24 (US24) from Human cytomegalovirus (strain Merlin) (HHV-5).